Reading from the N-terminus, the 122-residue chain is Large ribosomal subunit protein uL14 (122 aa).

It belongs to the universal ribosomal protein uL14 family. Part of the 50S ribosomal subunit. Forms a cluster with proteins L3 and L19. In the 70S ribosome, L14 and L19 interact and together make contacts with the 16S rRNA in bridges B5 and B8.

Its function is as follows. Binds to 23S rRNA. Forms part of two intersubunit bridges in the 70S ribosome. In Marinobacter nauticus (strain ATCC 700491 / DSM 11845 / VT8) (Marinobacter aquaeolei), this protein is Large ribosomal subunit protein uL14.